Reading from the N-terminus, the 293-residue chain is Elongation factor Ts (293 aa).

Residues 80–83 are involved in Mg(2+) ion dislocation from EF-Tu; sequence TDFV.

The protein belongs to the EF-Ts family.

The protein resides in the cytoplasm. Its function is as follows. Associates with the EF-Tu.GDP complex and induces the exchange of GDP to GTP. It remains bound to the aminoacyl-tRNA.EF-Tu.GTP complex up to the GTP hydrolysis stage on the ribosome. In Burkholderia multivorans (strain ATCC 17616 / 249), this protein is Elongation factor Ts.